The sequence spans 394 residues: MGEKDSETAPIWGKTRERERSNNNNIQPMDLESSSSVSGQQRSLTQSRSSYEERGRGVKEFRSWFPWLIPCFVVANVAVFVITMYVNNCPKKSGDCFADFLGRFSFQNTRENPLLGPSSLTLQTMGGLDVKKVVKGDEGWRLLSCNWLHGGVVHLLMNMLTLLFIGIRMEREFGFIRIGLLYLISGFGGSILSALFLRSNISVGASGAVFGLLGGMLSEIFINWTIYSNKVVTIVTLVLIVAVNLGLGVLPGVDNFAHIGGFATGFLLGFVLLIRPHYGWINQRNGPGAKPHRFKIYQGILWTISLLILVAGFIVGLISLFNNVDGNEHCSWCHYLSCVPTSKWSCNREPASCTTTQLGNQLSMTCLRNGKSASYILANPSDSRINSLCVQLCR.

The interval 1–51 (MGEKDSETAPIWGKTRERERSNNNNIQPMDLESSSSVSGQQRSLTQSRSSY) is disordered. A compositionally biased stretch (polar residues) spans 39–49 (GQQRSLTQSRS). Helical transmembrane passes span 64 to 84 (WFPWLIPCFVVANVAVFVITM), 147 to 167 (WLHGGVVHLLMNMLTLLFIGI), 175 to 195 (FIRIGLLYLISGFGGSILSAL), 201 to 221 (ISVGASGAVFGLLGGMLSEIF), 231 to 251 (VVTIVTLVLIVAVNLGLGVLP), 254 to 274 (DNFAHIGGFATGFLLGFVLLI), and 300 to 320 (ILWTISLLILVAGFIVGLISL). Catalysis depends on Ser-206, which acts as the Nucleophile. The active-site Charge relay system is His-258.

The protein belongs to the peptidase S54 family.

It localises to the membrane. The catalysed reaction is Cleaves type-1 transmembrane domains using a catalytic dyad composed of serine and histidine that are contributed by different transmembrane domains.. Probable rhomboid-type serine protease that catalyzes intramembrane proteolysis. The polypeptide is RHOMBOID-like protein 4 (Arabidopsis thaliana (Mouse-ear cress)).